The primary structure comprises 127 residues: Mediator of RNA polymerase II transcription subunit 9 (127 aa).

Residues Gln95–Gly119 adopt a coiled-coil conformation.

The protein belongs to the Mediator complex subunit 9 family. In terms of assembly, component of the Mediator complex.

The protein localises to the nucleus. Component of the Mediator complex, a coactivator involved in the regulated transcription of nearly all RNA polymerase II-dependent genes. Mediator functions as a bridge to convey information from gene-specific regulatory proteins to the basal RNA polymerase II transcription machinery. Mediator is recruited to promoters by direct interactions with regulatory proteins and serves as a scaffold for the assembly of a functional preinitiation complex with RNA polymerase II and the general transcription factors. This Eremothecium gossypii (strain ATCC 10895 / CBS 109.51 / FGSC 9923 / NRRL Y-1056) (Yeast) protein is Mediator of RNA polymerase II transcription subunit 9 (CSE2).